Reading from the N-terminus, the 689-residue chain is PR domain zinc finger protein 8 (689 aa).

Positions 16 to 131 constitute an SET domain; that stretch reads KAVQQCLTDI…KDEELLVWYG (116 aa). An S-adenosyl-L-methionine-binding site is contributed by Y130. The C2H2-type 1 zinc-finger motif lies at 155–183; it reads YTCLECSQRFQFEFPYVAHLRFRCPKRLH. 2 disordered regions span residues 185-333 and 397-506; these read ADIS…VGGR and SLQE…QPAR. The segment covering 193–210 has biased composition (gly residues); it reads QGGGVGTKDHGGGGGGGK. 2 stretches are compositionally biased toward low complexity: residues 241-258 and 273-286; these read PESS…AKPS and GGSS…LSSG. Residues 322 to 333 are compositionally biased toward gly residues; that stretch reads EGGGGAGLVGGR. Over residues 423–433 the composition is skewed to low complexity; it reads STPAAASPVGA. A compositionally biased stretch (gly residues) spans 472-491; the sequence is TSGGGGTGAGAAGGAGGGQG. 2 consecutive C2H2-type zinc fingers follow at residues 625 to 648 and 666 to 688; these read NWCA…RSHH and LKCP…MTSH.

Belongs to the class V-like SAM-binding methyltransferase superfamily. In terms of assembly, interacts with EPM2A and NHLRC1. This interaction sequesters EPM2A and NHLRC1 to the nucleus. Interacts with BHLHE22. Expressed in brain, heart, skeletal muscle, testes, prostate.

It is found in the nucleus. Probable histone methyltransferase, preferentially acting on 'Lys-9' of histone H3. Involved in the control of steroidogenesis through transcriptional repression of steroidogenesis marker genes such as CYP17A1 and LHCGR. Forms with BHLHE22 a transcriptional repressor complex controlling genes involved in neural development and neuronal differentiation. In the retina, it is required for rod bipolar and type 2 OFF-cone bipolar cell survival. This chain is PR domain zinc finger protein 8 (PRDM8), found in Homo sapiens (Human).